Reading from the N-terminus, the 205-residue chain is Outer-membrane lipoprotein LolB (205 aa).

The signal sequence occupies residues 1–17 (MFLRHCITFTLIALLAG). A lipid anchor (N-palmitoyl cysteine) is attached at cysteine 18. Cysteine 18 carries the S-diacylglycerol cysteine lipid modification.

The protein belongs to the LolB family. As to quaternary structure, monomer.

It is found in the cell outer membrane. Its function is as follows. Plays a critical role in the incorporation of lipoproteins in the outer membrane after they are released by the LolA protein. The polypeptide is Outer-membrane lipoprotein LolB (Pseudomonas putida (strain GB-1)).